Here is an 89-residue protein sequence, read N- to C-terminus: Small ribosomal subunit protein uS15 (89 aa).

Belongs to the universal ribosomal protein uS15 family. Part of the 30S ribosomal subunit. Forms a bridge to the 50S subunit in the 70S ribosome, contacting the 23S rRNA.

One of the primary rRNA binding proteins, it binds directly to 16S rRNA where it helps nucleate assembly of the platform of the 30S subunit by binding and bridging several RNA helices of the 16S rRNA. Functionally, forms an intersubunit bridge (bridge B4) with the 23S rRNA of the 50S subunit in the ribosome. This is Small ribosomal subunit protein uS15 from Methylococcus capsulatus (strain ATCC 33009 / NCIMB 11132 / Bath).